The following is a 448-amino-acid chain: MNINTSPDQIIRSSAQVTPGYMSGFGNSFETEALPGALPIGRNSPQRCAYGLYAEQLSGSPFTAPRGTNERSWLYRIRPSVKHSGRFEKADAGLWRSAPCHEYDLPIAQMRWDPTPVPKEEVTFVQGVQTMTTAGDVNTQAGMAAHVYLITKSMVDQHFYNADGELMFVLQQGNLRLVTEFGRIDAEPGEIVVIPRGVKFRVEIPNGPARGYLCENYGGAFTLPERGPIGANCLANARDFLTPVANYEDKDTPTELFVKWGGSLFKTTLPHSPIDVVAWHGNYAPYKYDLRTFSPVGAIGFDHPDPSIFTVLTSPSETAGTANIDFVIFPERWMVADNTFRPPWYHMNIMSEFMGLIYGVYDAKPQGFVPGGMSLHNCMLPHGPDRDAFEHASNGELKPVKLTGTMAFMFETRYPQRVTAHAANASTLQDDYADCWKGLEKRFDPNRP.

Residue His303 is the Proton acceptor of the active site. The Fe cation site is built by His346 and Glu352. Residues Tyr361 and His382 each coordinate homogentisate. Position 382 (His382) interacts with Fe cation.

This sequence belongs to the homogentisate dioxygenase family. As to quaternary structure, hexamer; dimer of trimers. Requires Fe cation as cofactor.

The catalysed reaction is homogentisate + O2 = 4-maleylacetoacetate + H(+). The protein operates within amino-acid degradation; L-phenylalanine degradation; acetoacetate and fumarate from L-phenylalanine: step 4/6. Functionally, involved in the catabolism of homogentisate (2,5-dihydroxyphenylacetate or 2,5-OH-PhAc), a central intermediate in the degradation of phenylalanine and tyrosine. Catalyzes the oxidative ring cleavage of the aromatic ring of homogentisate to yield maleylacetoacetate. This is Homogentisate 1,2-dioxygenase from Bradyrhizobium diazoefficiens (strain JCM 10833 / BCRC 13528 / IAM 13628 / NBRC 14792 / USDA 110).